The chain runs to 78 residues: uncharacterized protein (78 aa).

This is an uncharacterized protein from Methanocaldococcus jannaschii (strain ATCC 43067 / DSM 2661 / JAL-1 / JCM 10045 / NBRC 100440) (Methanococcus jannaschii).